A 1612-amino-acid chain; its full sequence is Roundabout homolog 1 (1612 aa).

The first 19 residues, 1–19 (MIAEPAHFYLFGLICLCSG), serve as a signal peptide directing secretion. Topologically, residues 20-858 (SRLRQEDFPP…QQISDVVRQP (839 aa)) are extracellular. Ig-like C2-type domains follow at residues 29-125 (PRIV…ASLE), 131-218 (DDFR…AELT), 223-307 (PSFV…ATLT), 312-407 (PHFV…LEVT), and 416-502 (PVIR…AYIE). A disulfide bridge links Cys50 with Cys108. An N-linked (GlcNAc...) asparagine glycan is attached at Asn121. 3 cysteine pairs are disulfide-bonded: Cys152–Cys201, Cys244–Cys291, and Cys333–Cys389. Asn424 carries N-linked (GlcNAc...) asparagine glycosylation. A disulfide bridge links Cys437 with Cys486. Fibronectin type-III domains lie at 524-618 (APSK…TQDV), 637-734 (VVLH…TLEE), and 739-835 (PPRS…LDSH). N-linked (GlcNAc...) asparagine glycans are attached at residues Asn751, Asn781, and Asn788. The chain crosses the membrane as a helical span at residues 859–879 (AFIAGIGAACWIILMVFSIWL). The Cytoplasmic segment spans residues 880–1612 (YRHRKKRNGL…NNEELEETES (733 aa)). Residue Ser901 is modified to Phosphoserine. Thr909 carries the phosphothreonine modification. The residue at position 999 (Tyr999) is a Phosphotyrosine. At Ser1016 the chain carries Phosphoserine. Tyr1034 carries the phosphotyrosine modification. A disordered region spans residues 1045 to 1068 (SNNMNNGAGDSSEKHWKPPGQQKP). Residue Tyr1075 is modified to Phosphotyrosine. Disordered stretches follow at residues 1088-1298 (RAND…ADME), 1313-1358 (EQTP…DGSF), and 1381-1612 (RRQM…ETES). A compositionally biased stretch (polar residues) spans 1098–1107 (PYNQSYDQNT). Residues 1108–1124 (GGSYNSSDRGSSTSGSQ) are compositionally biased toward low complexity. Positions 1147 to 1157 (LPPPPAHPPPH) are enriched in pro residues. Residue Thr1201 is modified to Phosphothreonine. Residues 1216-1230 (YSHQSTATLTPSPQE) show a composition bias toward polar residues. The segment covering 1242–1254 (DLGHMPHPPDRRR) has biased composition (basic and acidic residues). Positions 1257-1268 (VSPPPPPRPISP) are enriched in pro residues. Position 1258 is a phosphoserine (Ser1258). A compositionally biased stretch (acidic residues) spans 1283 to 1297 (MDTDAPEEEEDEADM). Positions 1345-1358 (SSGRSSVSSSDGSF) are enriched in low complexity. The span at 1399–1412 (PRPTSPVSTDSNMS) shows a compositional bias: polar residues. The span at 1420 to 1431 (RPAKKQKHQPGH) shows a compositional bias: basic residues. A compositionally biased stretch (pro residues) spans 1441–1451 (LPPPPVPPPAI). 2 stretches are compositionally biased toward basic and acidic residues: residues 1477-1502 (ARTD…RQVT) and 1510-1534 (DPRE…RDLP). The segment covering 1553 to 1562 (FPTSNNPRDP) has biased composition (polar residues). Positions 1563 to 1575 (SSSSSMSSRGSGS) are enriched in low complexity. Over residues 1603 to 1612 (NNEELEETES) the composition is skewed to acidic residues.

Belongs to the immunoglobulin superfamily. ROBO family. As to quaternary structure, homodimer. Dimerization is mediated by the extracellular domain and is independent of SLIT liganding. Interacts with SLIT1 Interacts with SLIT2. Interacts with FLRT3. Interacts with MYO9B (via Rho-GAP domain). In terms of processing, ubiquitinated. May be deubiquitinated by USP33. As to expression, detected in embryonic thalamus neurons (at protein level). Expressed in embryonal spinal cord. Expressed in embryonal lung, and in adult lung bronchial epithelial cells of large proximal airways.

The protein localises to the cell membrane. The protein resides in the cell projection. It is found in the axon. It localises to the endoplasmic reticulum-Golgi intermediate compartment membrane. Its function is as follows. Receptor for SLIT1 and SLIT2 that mediates cellular responses to molecular guidance cues in cellular migration, including axonal navigation at the ventral midline of the neural tube and projection of axons to different regions during neuronal development. Interaction with the intracellular domain of FLRT3 mediates axon attraction towards cells expressing NTN1. In axon growth cones, the silencing of the attractive effect of NTN1 by SLIT2 may require the formation of a ROBO1-DCC complex. Plays a role in the regulation of cell migration via its interaction with MYO9B; inhibits MYO9B-mediated stimulation of RHOA GTPase activity, and thereby leads to increased levels of active, GTP-bound RHOA. May be required for lung development. The polypeptide is Roundabout homolog 1 (Robo1) (Mus musculus (Mouse)).